The primary structure comprises 940 residues: Isoleucine--tRNA ligase (940 aa).

The short motif at 58 to 68 (PYANGSIHIGH) is the 'HIGH' region element. Glu564 is an L-isoleucyl-5'-AMP binding site. The 'KMSKS' region motif lies at 605-609 (KMSKS). Lys608 is a binding site for ATP. Zn(2+)-binding residues include Cys903, Cys906, Cys923, and Cys926.

Belongs to the class-I aminoacyl-tRNA synthetase family. IleS type 1 subfamily. Monomer. Zn(2+) serves as cofactor.

Its subcellular location is the cytoplasm. It catalyses the reaction tRNA(Ile) + L-isoleucine + ATP = L-isoleucyl-tRNA(Ile) + AMP + diphosphate. Functionally, catalyzes the attachment of isoleucine to tRNA(Ile). As IleRS can inadvertently accommodate and process structurally similar amino acids such as valine, to avoid such errors it has two additional distinct tRNA(Ile)-dependent editing activities. One activity is designated as 'pretransfer' editing and involves the hydrolysis of activated Val-AMP. The other activity is designated 'posttransfer' editing and involves deacylation of mischarged Val-tRNA(Ile). In Shewanella amazonensis (strain ATCC BAA-1098 / SB2B), this protein is Isoleucine--tRNA ligase.